Reading from the N-terminus, the 73-residue chain is UPF0435 protein Lm4b_01721 (73 aa).

The protein belongs to the UPF0435 family.

This is UPF0435 protein Lm4b_01721 from Listeria monocytogenes serotype 4b (strain CLIP80459).